The sequence spans 432 residues: MSSIASVFGREILDSRGNPTVEVEVTLESGLRARAAVPSGASTGSREALEMRDGDKARYCGKGVTKAVDHVNSEIADALLGMDSLRQVQIDNTLIDLDGTDNKSRLGANAMLGVSMACARVAASFLGLPLYKYLGGINAKVLPAPMMNIINGGAHAPNNLDIQEFMIMPVGAMTFRDSLRMGTEIFHMLQAILKKDGHVTSVGDEGGFAPNLKNHDEAFAYIIKAIEEAGYNPGTEVALAIDAASSEFYKDGKYVLAGEGKTFNSAELSEWMAEFTRKYPLISIEDGMAESDWDGWGMLTASLGDHVQLVGDDVFVTNPSILAEGIAEGVANSILIKLNQIGTVTETLDTIEMAKEAAYTTVISHRSGETEDSFIADLAVGVNSGQIKTGSLCRSERMSKYNQLLRIEEELGDDAEFFGPMLAEYYSLGTEE.

Gln-163 contributes to the (2R)-2-phosphoglycerate binding site. Glu-205 acts as the Proton donor in catalysis. 3 residues coordinate Mg(2+): Asp-242, Glu-285, and Asp-312. 4 residues coordinate (2R)-2-phosphoglycerate: Lys-337, Arg-366, Ser-367, and Lys-388. Lys-337 serves as the catalytic Proton acceptor.

This sequence belongs to the enolase family. Requires Mg(2+) as cofactor.

The protein localises to the cytoplasm. It is found in the secreted. The protein resides in the cell surface. The enzyme catalyses (2R)-2-phosphoglycerate = phosphoenolpyruvate + H2O. It participates in carbohydrate degradation; glycolysis; pyruvate from D-glyceraldehyde 3-phosphate: step 4/5. Its function is as follows. Catalyzes the reversible conversion of 2-phosphoglycerate (2-PG) into phosphoenolpyruvate (PEP). It is essential for the degradation of carbohydrates via glycolysis. The protein is Enolase of Desulfovibrio desulfuricans (strain ATCC 27774 / DSM 6949 / MB).